We begin with the raw amino-acid sequence, 622 residues long: uncharacterized protein (622 aa).

[4Fe-4S] cluster-binding residues include cysteine 302, cysteine 306, cysteine 310, and cysteine 521.

Belongs to the AOR/FOR family. [4Fe-4S] cluster is required as a cofactor.

This is an uncharacterized protein from Methanocaldococcus jannaschii (strain ATCC 43067 / DSM 2661 / JAL-1 / JCM 10045 / NBRC 100440) (Methanococcus jannaschii).